A 60-amino-acid chain; its full sequence is Potassium channel toxin alpha-KTx 15.9 (60 aa).

The first 22 residues, 1-22 (MKIFLPVLVMLILCSMCLLTEG), serve as a signal peptide directing secretion. Disulfide bonds link cysteine 30–cysteine 51, cysteine 36–cysteine 56, and cysteine 40–cysteine 58.

This sequence belongs to the short scorpion toxin superfamily. Potassium channel inhibitor family. Alpha-KTx 15 subfamily. Expressed by the venom gland.

It is found in the secreted. Functionally, blocker of A-type voltage-gated potassium channels of cerebellar granular cells. May also inhibit Kv4/KCND when coexpressed with DPP6 or DPP10. The occlusion of the outer entry of the K(+) conducting pore is partially reversible and affects both open and closed channels. It shares the same target in rat brain than BmTX3 (AC Q8I0L5) and AmmTX3 (AC P60208). Has been shown to weakly inhibit TRPV1 channels. The chain is Potassium channel toxin alpha-KTx 15.9 from Lychas mucronatus (Chinese swimming scorpion).